Here is a 198-residue protein sequence, read N- to C-terminus: Chromophore lyase CpcS/CpeS 2 (198 aa).

It belongs to the CpcS/CpeS biliprotein lyase family.

It localises to the plastid. The protein resides in the organellar chromatophore. Functionally, covalently attaches a chromophore to Cys residue(s) of phycobiliproteins. The sequence is that of Chromophore lyase CpcS/CpeS 2 from Paulinella chromatophora.